The primary structure comprises 131 residues: Profilin (131 aa).

This sequence belongs to the profilin family. As to quaternary structure, occurs in many kinds of cells as a complex with monomeric actin in a 1:1 ratio.

The protein resides in the cytoplasm. It is found in the cytoskeleton. Functionally, binds to actin and affects the structure of the cytoskeleton. At high concentrations, profilin prevents the polymerization of actin, whereas it enhances it at low concentrations. By binding to PIP2, it inhibits the formation of IP3 and DG. The protein is Profilin of Citrus sinensis (Sweet orange).